Here is a 453-residue protein sequence, read N- to C-terminus: UDP-N-acetylmuramoylalanine--D-glutamate ligase (453 aa).

ATP is bound at residue 117–123 (GANGKST).

Belongs to the MurCDEF family.

Its subcellular location is the cytoplasm. It catalyses the reaction UDP-N-acetyl-alpha-D-muramoyl-L-alanine + D-glutamate + ATP = UDP-N-acetyl-alpha-D-muramoyl-L-alanyl-D-glutamate + ADP + phosphate + H(+). Its pathway is cell wall biogenesis; peptidoglycan biosynthesis. Functionally, cell wall formation. Catalyzes the addition of glutamate to the nucleotide precursor UDP-N-acetylmuramoyl-L-alanine (UMA). In Methylobacillus flagellatus (strain ATCC 51484 / DSM 6875 / VKM B-1610 / KT), this protein is UDP-N-acetylmuramoylalanine--D-glutamate ligase.